The chain runs to 317 residues: L-lactate dehydrogenase (317 aa).

NAD(+)-binding positions include V17, D38, K43, and 82-83 (GA). Substrate contacts are provided by residues Q85, R91, and 123-126 (NPVD). NAD(+) is bound by residues 121-123 (VAN) and S146. 151–154 (DSAR) serves as a coordination point for substrate. The beta-D-fructose 1,6-bisphosphate site is built by R156 and H171. Catalysis depends on H178, which acts as the Proton acceptor. At Y224 the chain carries Phosphotyrosine. Substrate is bound at residue T233.

Belongs to the LDH/MDH superfamily. LDH family. As to quaternary structure, homotetramer.

It localises to the cytoplasm. It catalyses the reaction (S)-lactate + NAD(+) = pyruvate + NADH + H(+). Its pathway is fermentation; pyruvate fermentation to lactate; (S)-lactate from pyruvate: step 1/1. With respect to regulation, allosterically activated by fructose 1,6-bisphosphate (FBP). In terms of biological role, catalyzes the conversion of lactate to pyruvate. The polypeptide is L-lactate dehydrogenase (Moorella thermoacetica (strain ATCC 39073 / JCM 9320)).